Here is a 447-residue protein sequence, read N- to C-terminus: MGPRRLPWARPGPALGLLLLALAGAVPAAGGSCSLLEEGNTIQKLHEDCFCYVQNRTMHLQYIWSTVQVKINSTRTFRFVPTPEKSNCRNSETVFEFAACAVQILWRPETSTETFLKIKQYGEDFCFRIQPFKEELYTVSMTREMLDGKLLFLFAAGIFLFHFANSLSRSTNFFYLSGIILGVLALLVFVLLALKRFIPRRSTFWILLSGCWMSSLYLIYCFKENMQWLWSEHRIYVLGYFVAVGTLSFATCYQHGPLTSELSITLFTWTLQLTAFVFIYCGVNIPQVAYAIIAVKPSPKGLGYPPAAAWHIGRKMKNHFQSKKVVVRCLTEEEYREQGETETVRALEELRSFCKNPDFSSWLAVSKLQSPHRFAGFVLGSPHVSPAETKAHDEEYGIGSSFLEEQLFETRTESEQDETTSYIHEGDDENEDEIHEPISFPYATELL.

The N-terminal stretch at 1–28 (MGPRRLPWARPGPALGLLLLALAGAVPA) is a signal peptide. A run of 5 helical transmembrane segments spans residues 144 to 164 (EMLD…FHFA), 173 to 193 (FFYL…VLLA), 202 to 222 (STFW…IYCF), 235 to 255 (IYVL…CYQH), and 275 to 295 (AFVF…IIAV). Positions 410–438 (TRTESEQDETTSYIHEGDDENEDEIHEPI) are disordered.

This sequence belongs to the NEMP family.

It localises to the nucleus inner membrane. This chain is Nuclear envelope integral membrane protein 2 (NEMP2), found in Gallus gallus (Chicken).